The primary structure comprises 362 residues: S-adenosylmethionine:tRNA ribosyltransferase-isomerase (362 aa).

The protein belongs to the QueA family. As to quaternary structure, monomer.

It localises to the cytoplasm. The enzyme catalyses 7-aminomethyl-7-carbaguanosine(34) in tRNA + S-adenosyl-L-methionine = epoxyqueuosine(34) in tRNA + adenine + L-methionine + 2 H(+). Its pathway is tRNA modification; tRNA-queuosine biosynthesis. Its function is as follows. Transfers and isomerizes the ribose moiety from AdoMet to the 7-aminomethyl group of 7-deazaguanine (preQ1-tRNA) to give epoxyqueuosine (oQ-tRNA). The sequence is that of S-adenosylmethionine:tRNA ribosyltransferase-isomerase from Xanthobacter autotrophicus (strain ATCC BAA-1158 / Py2).